The sequence spans 135 residues: Fluoride-specific ion channel FluC 2 (135 aa).

4 helical membrane-spanning segments follow: residues 5 to 25, 36 to 56, 68 to 88, and 100 to 120; these read VLAAVAAGGALGALARAGLLA, WGTVLVNVLGCALIGVLMETL, PFLGVGVLGGFTTFSAAITDA, and ALLAIAANLIGALLAVSAAAG. Positions 76 and 79 each coordinate Na(+).

This sequence belongs to the fluoride channel Fluc/FEX (TC 1.A.43) family.

Its subcellular location is the cell membrane. The catalysed reaction is fluoride(in) = fluoride(out). Its activity is regulated as follows. Na(+) is not transported, but it plays an essential structural role and its presence is essential for fluoride channel function. In terms of biological role, fluoride-specific ion channel. Important for reducing fluoride concentration in the cell, thus reducing its toxicity. The protein is Fluoride-specific ion channel FluC 2 of Thermobifida fusca (strain YX).